Consider the following 331-residue polypeptide: Fructose-1,6-bisphosphatase class 1 2 (331 aa).

The Mg(2+) site is built by glutamate 91, aspartate 112, leucine 114, and aspartate 115. Substrate-binding positions include 115-118, asparagine 207, tyrosine 238, and lysine 268; that span reads DGSS. Mg(2+) is bound at residue glutamate 274.

It belongs to the FBPase class 1 family. In terms of assembly, homotetramer. Requires Mg(2+) as cofactor.

The protein localises to the cytoplasm. The enzyme catalyses beta-D-fructose 1,6-bisphosphate + H2O = beta-D-fructose 6-phosphate + phosphate. Its pathway is carbohydrate biosynthesis; Calvin cycle. This chain is Fructose-1,6-bisphosphatase class 1 2, found in Acaryochloris marina (strain MBIC 11017).